The sequence spans 352 residues: Homeobox protein Mohawk (352 aa).

A disordered region spans residues 19-54; sequence GASERERGGRPYSGVLDSPHARPEVGIPDGPPLKDN. A DNA-binding region (homeobox; TALE-type) is located at residues 71–132; the sequence is VRHKRQALQD…NARRRLKNTV (62 aa). 2 disordered regions span residues 159-189 and 245-301; these read VSSD…VHHP and TRQR…PSKD.

It belongs to the TALE/IRO homeobox family.

It is found in the nucleus. In terms of biological role, may act as a morphogenetic regulator of cell adhesion. The polypeptide is Homeobox protein Mohawk (MKX) (Homo sapiens (Human)).